The chain runs to 190 residues: Endo-1,4-beta-xylanase (190 aa).

A GH11 domain is found at 1 to 190 (QTIGPGTGYS…SSGSASITVS (190 aa)). The active-site Nucleophile is glutamate 86. Glutamate 177 acts as the Proton donor in catalysis.

The protein belongs to the glycosyl hydrolase 11 (cellulase G) family.

It carries out the reaction Endohydrolysis of (1-&gt;4)-beta-D-xylosidic linkages in xylans.. The protein operates within glycan degradation; xylan degradation. The polypeptide is Endo-1,4-beta-xylanase (Trichoderma harzianum (Hypocrea lixii)).